A 195-amino-acid chain; its full sequence is Replication restart protein PriC (195 aa).

It belongs to the PriC family. As to quaternary structure, monomer. Component of the replication restart primosome, which is composed of PriA, PriB, PriC, DnaB and DnaT; DnaG primase associates transiently with this complex. Interacts with the C-terminus of SSB; this interaction is required to load the main replicative helicase onto substrate replication forks. Interacts with helicase DnaB alone and in the DnaB-DnaC complex, probably 1:1 binding with DnaB.

In terms of biological role, involved in the restart of stalled replication forks, which reloads the DnaB replicative helicase on sites other than the origin of replication. Recognizes abandoned replication forks and remodels DNA single-stranded binding protein (SSB) on ssDNA to uncover a loading site for DnaB. There are several restart pathways, the PriA-PriC pathway is a minor restart pathway. Part of the minor PriC-Rep pathway for restart of stalled replication forks, which has a different substrate specificity than PriA. Part of the major restart pathway with PriA, PriB, DnaB, DnaT and DnaG primase. priB and priC have redundant roles in the cell. The protein is Replication restart protein PriC of Haemophilus influenzae (strain ATCC 51907 / DSM 11121 / KW20 / Rd).